Reading from the N-terminus, the 190-residue chain is ATP synthase subunit delta (190 aa).

The protein belongs to the ATPase delta chain family. In terms of assembly, F-type ATPases have 2 components, F(1) - the catalytic core - and F(0) - the membrane proton channel. F(1) has five subunits: alpha(3), beta(3), gamma(1), delta(1), epsilon(1). F(0) has three main subunits: a(1), b(2) and c(10-14). The alpha and beta chains form an alternating ring which encloses part of the gamma chain. F(1) is attached to F(0) by a central stalk formed by the gamma and epsilon chains, while a peripheral stalk is formed by the delta and b chains.

It is found in the cell inner membrane. F(1)F(0) ATP synthase produces ATP from ADP in the presence of a proton or sodium gradient. F-type ATPases consist of two structural domains, F(1) containing the extramembraneous catalytic core and F(0) containing the membrane proton channel, linked together by a central stalk and a peripheral stalk. During catalysis, ATP synthesis in the catalytic domain of F(1) is coupled via a rotary mechanism of the central stalk subunits to proton translocation. Functionally, this protein is part of the stalk that links CF(0) to CF(1). It either transmits conformational changes from CF(0) to CF(1) or is implicated in proton conduction. This is ATP synthase subunit delta from Methylobacterium sp. (strain 4-46).